Consider the following 98-residue polypeptide: MSMVYANIFLAFIMSLMGLLMYRSHLMSSLLCLEGMMLSLFVMMTVTILNNHFTLASMAPIILLVFAACEAALGLSLLVMVSNTYGTDYVQNLNLLQC.

Helical transmembrane passes span 1–21 (MSMVYANIFLAFIMSLMGLLM), 29–49 (SLLCLEGMMLSLFVMMTVTIL), and 61–81 (IILLVFAACEAALGLSLLVMV).

This sequence belongs to the complex I subunit 4L family. Core subunit of respiratory chain NADH dehydrogenase (Complex I) which is composed of 45 different subunits.

Its subcellular location is the mitochondrion inner membrane. The catalysed reaction is a ubiquinone + NADH + 5 H(+)(in) = a ubiquinol + NAD(+) + 4 H(+)(out). Its function is as follows. Core subunit of the mitochondrial membrane respiratory chain NADH dehydrogenase (Complex I) which catalyzes electron transfer from NADH through the respiratory chain, using ubiquinone as an electron acceptor. Part of the enzyme membrane arm which is embedded in the lipid bilayer and involved in proton translocation. This chain is NADH-ubiquinone oxidoreductase chain 4L (MT-ND4L), found in Halichoerus grypus (Gray seal).